We begin with the raw amino-acid sequence, 270 residues long: Type III pantothenate kinase (270 aa).

11 to 18 (DAGNSRIK) provides a ligand contact to ATP. Residues tyrosine 96 and 103 to 106 (GSDR) contribute to the substrate site. The active-site Proton acceptor is aspartate 105. Threonine 129 contacts ATP. Threonine 195 contacts substrate.

Belongs to the type III pantothenate kinase family. As to quaternary structure, homodimer. The cofactor is NH4(+). K(+) serves as cofactor.

It localises to the cytoplasm. It catalyses the reaction (R)-pantothenate + ATP = (R)-4'-phosphopantothenate + ADP + H(+). Its pathway is cofactor biosynthesis; coenzyme A biosynthesis; CoA from (R)-pantothenate: step 1/5. Catalyzes the phosphorylation of pantothenate (Pan), the first step in CoA biosynthesis. The protein is Type III pantothenate kinase of Paraburkholderia xenovorans (strain LB400).